The primary structure comprises 252 residues: MHAEFRTDRGRIRHHNEDNGGVFENKDKQPIVIVADGMGGHRAGDVASEMAVRLLSDAWKETTALLTAEEIETWLQKTIQEVNKEIVLYAESEMDLNGMGTTLVAAIMAQSQVVIANVGDSRGYLLQNDVMRQLTEDHSLVHELLRTGEISKEDAMNHPRKNILLRALGVEGKVEVDTFVVPFQTSDTLLLCSDGLTNMVPEAEMEEILKSKRTLSEKADVFITKANSYGGEDNITVLLVERNLMQKGRDAS.

A disordered region spans residues 1 to 22 (MHAEFRTDRGRIRHHNEDNGGV). The region spanning 2–242 (HAEFRTDRGR…DNITVLLVER (241 aa)) is the PPM-type phosphatase domain. The Mn(2+) site is built by aspartate 36, glycine 37, aspartate 194, and aspartate 233.

Belongs to the PP2C family. It depends on Mn(2+) as a cofactor.

The protein localises to the cytoplasm. It is found in the membrane. The enzyme catalyses O-phospho-L-seryl-[protein] + H2O = L-seryl-[protein] + phosphate. It carries out the reaction O-phospho-L-threonyl-[protein] + H2O = L-threonyl-[protein] + phosphate. In terms of biological role, protein phosphatase that dephosphorylates EF-Tu. The chain is Serine/threonine phosphatase stp (stp) from Listeria innocua serovar 6a (strain ATCC BAA-680 / CLIP 11262).